The chain runs to 421 residues: Enolase (421 aa).

Residue Glu-207 is the Proton donor of the active site. Positions 244, 285, and 312 each coordinate Mg(2+). Lys-337 functions as the Proton acceptor in the catalytic mechanism. (2R)-2-phosphoglycerate is bound by residues Lys-337, Arg-366, Ser-367, and Lys-388.

This sequence belongs to the enolase family. Mg(2+) serves as cofactor.

The protein localises to the cytoplasm. It localises to the secreted. The protein resides in the cell surface. It carries out the reaction (2R)-2-phosphoglycerate = phosphoenolpyruvate + H2O. The protein operates within carbohydrate degradation; glycolysis; pyruvate from D-glyceraldehyde 3-phosphate: step 4/5. Its function is as follows. Catalyzes the reversible conversion of 2-phosphoglycerate (2-PG) into phosphoenolpyruvate (PEP). It is essential for the degradation of carbohydrates via glycolysis. In Ehrlichia ruminantium (strain Gardel), this protein is Enolase.